The primary structure comprises 466 residues: Cysteine--tRNA ligase (466 aa).

A Zn(2+)-binding site is contributed by C29. The 'HIGH' region signature appears at 31 to 41 (PTVYDFAHIGN). Positions 210, 235, and 239 each coordinate Zn(2+). A 'KMSKS' region motif is present at residues 267 to 271 (KMSKS). K270 serves as a coordination point for ATP.

This sequence belongs to the class-I aminoacyl-tRNA synthetase family. In terms of assembly, monomer. Requires Zn(2+) as cofactor.

The protein localises to the cytoplasm. It carries out the reaction tRNA(Cys) + L-cysteine + ATP = L-cysteinyl-tRNA(Cys) + AMP + diphosphate. This is Cysteine--tRNA ligase from Solibacter usitatus (strain Ellin6076).